We begin with the raw amino-acid sequence, 545 residues long: Putative serine/threonine-protein kinase L673 (545 aa).

One can recognise a Cyclin N-terminal domain in the interval 13 to 125 (RLGLVNWMLN…YKVYYLTIWK (113 aa)). In terms of domain architecture, Protein kinase spans 264-543 (IDFQNKLGSG…NCLKKIKESF (280 aa)). ATP contacts are provided by residues 270–278 (LGSGTYGSV) and K291. D384 serves as the catalytic Proton acceptor.

Belongs to the protein kinase superfamily. Ser/Thr protein kinase family.

The catalysed reaction is L-seryl-[protein] + ATP = O-phospho-L-seryl-[protein] + ADP + H(+). It catalyses the reaction L-threonyl-[protein] + ATP = O-phospho-L-threonyl-[protein] + ADP + H(+). In Acanthamoeba polyphaga (Amoeba), this protein is Putative serine/threonine-protein kinase L673.